Here is a 495-residue protein sequence, read N- to C-terminus: Calcium-dependent protein kinase 11 (495 aa).

The Protein kinase domain occupies 26–284 (YLLGKKLGQG…AHEALCHPWI (259 aa)). ATP is bound by residues 32-40 (LGQGQFGTT) and lysine 55. Residue aspartate 150 is the Proton acceptor of the active site. A Phosphoserine modification is found at serine 190. Residues 290–320 (APDKPLDPAVLSRLKQFSQMNKIKKMALRVI) are autoinhibitory domain. EF-hand domains follow at residues 327-362 (EEIG…VGSE), 363-398 (LMES…MNKM), 399-434 (EREE…FGLC), and 438-468 (LDDM…GDGV). The Ca(2+) site is built by aspartate 340, aspartate 342, serine 344, threonine 346, glutamate 351, aspartate 376, aspartate 378, serine 380, threonine 382, glutamate 387, aspartate 412, aspartate 414, serine 416, tyrosine 418, glutamate 423, aspartate 446, aspartate 448, aspartate 450, lysine 452, and glutamate 457.

It belongs to the protein kinase superfamily. Ser/Thr protein kinase family. CDPK subfamily. Interacts with Di19.

It is found in the cytoplasm. Its subcellular location is the nucleus. The enzyme catalyses L-seryl-[protein] + ATP = O-phospho-L-seryl-[protein] + ADP + H(+). The catalysed reaction is L-threonyl-[protein] + ATP = O-phospho-L-threonyl-[protein] + ADP + H(+). Activated by calcium. Autophosphorylation may play an important role in the regulation of the kinase activity. Functionally, may play a role in signal transduction pathways that involve calcium as a second messenger. Functions as a regulator of the calcium-mediated abscisic acid (ABA) signaling pathway. Phosphorylates ABA-responsive transcription factors ABF1 and ABF4 in vitro. This chain is Calcium-dependent protein kinase 11 (CPK11), found in Arabidopsis thaliana (Mouse-ear cress).